Reading from the N-terminus, the 855-residue chain is MNAVDTQYLEKHTPMMRQYLTLKAETPDMLLFYRMGDFYELFYDDAKRASELLGISLTARGKSGGDPIPMAGIPYHAVEGYLAKLVQLRVSVAICEQIGDPATTKGPVERKIVRIVTPGTLTDEALLQERQDNLLAAVYHGKVGFGYATLDVSSGRFVVTELASKEALEAELQRTNPAELLYSEDFSEPALIASLSGKRRRPEWEFDYDTSYKLLLEQFGTKDLYGFGLGEVRLSLQAAGCLIQYVKDTQRTALPHINAITRFNQCDSIVLDAATRKNLELTRNLQGGSDNTLASVLDNTATPMGSRMLQRWIHEPLRNHNIIRARHDAIDELLDNGYHESLHEQLKALGDIERITARLAIRSARPRDFARLRQALALLPEIQQQLADCNSPHLKALSSHLGDFPEEHALLSRAIVDNPPMLIRDGGVIKEGYHNELDEWRKLSQGATDYLAELEAREKAATGASTLKVGYNRVHGYYIEVSRRESDLVPMSYQRRQTLKNTERYIVAELKEHEEKVLSSQGKALALEKQLWEELFDLLMPRLHELQAFARAAAELDVITNFAERAEQLDYHRPELTAQSGIHIEAGRHPVVERVSQTPFIANPVSLNPARRMLIVTGPNMGGKSTYMRQVALITLMAHIGSFVPAQKAAIGPVDRIFTRIGAADDLASGRSTFMVEMTETANILHNATPESLVLMDEIGRGTSTYDGLSLAWSAAEHLAQNLKSMTLFATHYFELTQLPDQMENVANVHLDAIEHDDTIAFMHAVQEGAASKSYGLQVAALAGVPAKVVQAAKHKLHHLESRDREEELPELRQAQLSMTMPETSKALDRLDTIDPDSLTPRQALDLLYELKQLR.

618-625 (GPNMGGKS) is a binding site for ATP.

This sequence belongs to the DNA mismatch repair MutS family.

In terms of biological role, this protein is involved in the repair of mismatches in DNA. It is possible that it carries out the mismatch recognition step. This protein has a weak ATPase activity. The chain is DNA mismatch repair protein MutS from Shewanella loihica (strain ATCC BAA-1088 / PV-4).